A 341-amino-acid polypeptide reads, in one-letter code: Cysteine-rich with EGF-like domain protein 2 (341 aa).

Residues 1-24 (MLLSCSIFRLFCIILLLQLGSIYT) form the signal peptide. Positions 136-178 (DCNTCIGGADRPCHGNGKCDGDGTRAGNGKCSCDEGYDGEFCL) constitute an EGF-like domain. Disulfide bonds link Cys140–Cys154, Cys148–Cys166, and Cys168–Cys177. Asn190 is a glycosylation site (N-linked (GlcNAc...) asparagine). FU repeat units lie at residues 193–248 (FFLC…DQYC) and 254–308 (SFSC…NQHC). Positions 291–317 (DIDECTEDPASCSDNQHCLNTDGSFSC) constitute an EGF-like 2; calcium-binding; truncated domain.

Belongs to the CRELD family.

Its subcellular location is the secreted. It localises to the endoplasmic reticulum. Its function is as follows. Possible role in neuronal acetylcholine receptor transport. In Danio rerio (Zebrafish), this protein is Cysteine-rich with EGF-like domain protein 2 (creld2).